Consider the following 353-residue polypeptide: Photosystem II D2 protein (353 aa).

N-acetylthreonine is present on T2. At T2 the chain carries Phosphothreonine. The chain crosses the membrane as a helical span at residues C41–T61. H118 lines the chlorophyll a pocket. Residues G125–P141 form a helical membrane-spanning segment. Pheophytin a-binding residues include Q130 and N143. The helical transmembrane segment at V153–S166 threads the bilayer. H198 serves as a coordination point for chlorophyll a. A helical transmembrane segment spans residues A208 to D228. H215 and F262 together coordinate a plastoquinone. Residue H215 participates in Fe cation binding. H269 contacts Fe cation. A helical membrane pass occupies residues G279–R295.

This sequence belongs to the reaction center PufL/M/PsbA/D family. PSII is composed of 1 copy each of membrane proteins PsbA, PsbB, PsbC, PsbD, PsbE, PsbF, PsbH, PsbI, PsbJ, PsbK, PsbL, PsbM, PsbT, PsbX, PsbY, PsbZ, Psb30/Ycf12, at least 3 peripheral proteins of the oxygen-evolving complex and a large number of cofactors. It forms dimeric complexes. The D1/D2 heterodimer binds P680, chlorophylls that are the primary electron donor of PSII, and subsequent electron acceptors. It shares a non-heme iron and each subunit binds pheophytin, quinone, additional chlorophylls, carotenoids and lipids. There is also a Cl(-1) ion associated with D1 and D2, which is required for oxygen evolution. The PSII complex binds additional chlorophylls, carotenoids and specific lipids. is required as a cofactor.

The protein resides in the plastid. Its subcellular location is the chloroplast thylakoid membrane. It catalyses the reaction 2 a plastoquinone + 4 hnu + 2 H2O = 2 a plastoquinol + O2. Its function is as follows. Photosystem II (PSII) is a light-driven water:plastoquinone oxidoreductase that uses light energy to abstract electrons from H(2)O, generating O(2) and a proton gradient subsequently used for ATP formation. It consists of a core antenna complex that captures photons, and an electron transfer chain that converts photonic excitation into a charge separation. The D1/D2 (PsbA/PsbD) reaction center heterodimer binds P680, the primary electron donor of PSII as well as several subsequent electron acceptors. D2 is needed for assembly of a stable PSII complex. This Ipomoea purpurea (Common morning glory) protein is Photosystem II D2 protein.